We begin with the raw amino-acid sequence, 452 residues long: 1,3-beta-glucanosyltransferase gel1 (452 aa).

Positions 1 to 19 (MKASAVTAALAVGASTVLA) are cleaved as a signal peptide. A disulfide bridge connects residues Cys71 and Cys100. (1,3-beta-D-glucosyl)n-binding residues include Tyr89, Asn159, Glu160, Asp201, and Arg206. The active-site Proton donor is the Glu160. 2 disulfides stabilise this stretch: Cys215–Cys345 and Cys233–Cys264. N-linked (GlcNAc...) asparagine glycosylation occurs at Asn249. The Nucleophile role is filled by Glu261. Tyr292 lines the (1,3-beta-D-glucosyl)n pocket. A compositionally biased stretch (polar residues) spans 325–340 (EKTSNPSGDGNYNKTG). The interval 325–419 (EKTSNPSGDG…SGTSTSSKGA (95 aa)) is disordered. Asn337 is a glycosylation site (N-linked (GlcNAc...) asparagine). Low complexity predominate over residues 393–419 (STATAEPGSGSATGSSSSGTSTSSKGA). The GPI-like-anchor amidated alanine moiety is linked to residue Ala419. Residues 420–452 (AAGLTVPSLTMAPVVVGAVTLLSTVFGAGLVLL) constitute a propeptide, removed in mature form.

It belongs to the glycosyl hydrolase 72 family. The GPI-like anchor contains a phosphoceramide lipid group. The anchor position has not been determined.

It is found in the cell membrane. Splits internally a 1,3-beta-glucan molecule and transfers the newly generated reducing end (the donor) to the non-reducing end of another 1,3-beta-glucan molecule (the acceptor) forming a 1,3-beta linkage, resulting in the elongation of 1,3-beta-glucan chains in the cell wall. Involved in cell wall morphogenesis. This Aspergillus fumigatus (strain CBS 144.89 / FGSC A1163 / CEA10) (Neosartorya fumigata) protein is 1,3-beta-glucanosyltransferase gel1 (gel1).